Reading from the N-terminus, the 229-residue chain is 2-C-methyl-D-erythritol 4-phosphate cytidylyltransferase (229 aa).

The protein belongs to the IspD/TarI cytidylyltransferase family. IspD subfamily.

The catalysed reaction is 2-C-methyl-D-erythritol 4-phosphate + CTP + H(+) = 4-CDP-2-C-methyl-D-erythritol + diphosphate. Its pathway is isoprenoid biosynthesis; isopentenyl diphosphate biosynthesis via DXP pathway; isopentenyl diphosphate from 1-deoxy-D-xylulose 5-phosphate: step 2/6. Catalyzes the formation of 4-diphosphocytidyl-2-C-methyl-D-erythritol from CTP and 2-C-methyl-D-erythritol 4-phosphate (MEP). This Neisseria meningitidis serogroup B (strain ATCC BAA-335 / MC58) protein is 2-C-methyl-D-erythritol 4-phosphate cytidylyltransferase.